Reading from the N-terminus, the 231-residue chain is 7-cyano-7-deazaguanine synthase (231 aa).

8–18 serves as a coordination point for ATP; it reads FSGGQDSTTCL. Zn(2+)-binding residues include Cys188, Cys197, Cys200, and Cys203.

It belongs to the QueC family. Zn(2+) serves as cofactor.

It catalyses the reaction 7-carboxy-7-deazaguanine + NH4(+) + ATP = 7-cyano-7-deazaguanine + ADP + phosphate + H2O + H(+). It functions in the pathway purine metabolism; 7-cyano-7-deazaguanine biosynthesis. In terms of biological role, catalyzes the ATP-dependent conversion of 7-carboxy-7-deazaguanine (CDG) to 7-cyano-7-deazaguanine (preQ(0)). The chain is 7-cyano-7-deazaguanine synthase from Escherichia coli (strain ATCC 8739 / DSM 1576 / NBRC 3972 / NCIMB 8545 / WDCM 00012 / Crooks).